A 491-amino-acid chain; its full sequence is 3-octaprenyl-4-hydroxybenzoate carboxy-lyase (491 aa).

N172 provides a ligand contact to Mn(2+). Residues I175–R177, R189–L191, and R194–G195 each bind prenylated FMN. E238 is a binding site for Mn(2+). The active-site Proton donor is D287.

Belongs to the UbiD family. In terms of assembly, homohexamer. Requires prenylated FMN as cofactor. Mn(2+) serves as cofactor.

It is found in the cell membrane. The enzyme catalyses a 4-hydroxy-3-(all-trans-polyprenyl)benzoate + H(+) = a 2-(all-trans-polyprenyl)phenol + CO2. Its pathway is cofactor biosynthesis; ubiquinone biosynthesis. Functionally, catalyzes the decarboxylation of 3-octaprenyl-4-hydroxy benzoate to 2-octaprenylphenol, an intermediate step in ubiquinone biosynthesis. This Alcanivorax borkumensis (strain ATCC 700651 / DSM 11573 / NCIMB 13689 / SK2) protein is 3-octaprenyl-4-hydroxybenzoate carboxy-lyase.